A 218-amino-acid polypeptide reads, in one-letter code: N-(5'-phosphoribosyl)anthranilate isomerase (218 aa).

This sequence belongs to the TrpF family.

The enzyme catalyses N-(5-phospho-beta-D-ribosyl)anthranilate = 1-(2-carboxyphenylamino)-1-deoxy-D-ribulose 5-phosphate. It participates in amino-acid biosynthesis; L-tryptophan biosynthesis; L-tryptophan from chorismate: step 3/5. The sequence is that of N-(5'-phosphoribosyl)anthranilate isomerase from Rhodopseudomonas palustris (strain BisB18).